The chain runs to 421 residues: Glutamyl-tRNA reductase (421 aa).

Residues 49–52 (TCNR), Ser-109, 114–116 (EAQ), and Gln-120 contribute to the substrate site. The active-site Nucleophile is Cys-50. 189-194 (GAGEMC) provides a ligand contact to NADP(+).

The protein belongs to the glutamyl-tRNA reductase family. As to quaternary structure, homodimer.

It catalyses the reaction (S)-4-amino-5-oxopentanoate + tRNA(Glu) + NADP(+) = L-glutamyl-tRNA(Glu) + NADPH + H(+). The protein operates within porphyrin-containing compound metabolism; protoporphyrin-IX biosynthesis; 5-aminolevulinate from L-glutamyl-tRNA(Glu): step 1/2. Its function is as follows. Catalyzes the NADPH-dependent reduction of glutamyl-tRNA(Glu) to glutamate 1-semialdehyde (GSA). This chain is Glutamyl-tRNA reductase, found in Magnetococcus marinus (strain ATCC BAA-1437 / JCM 17883 / MC-1).